Reading from the N-terminus, the 279-residue chain is Putative Delta(7)-sterol-C5(6)-desaturase 2 (279 aa).

2 helical membrane-spanning segments follow: residues 48–68 and 127–147; these read LAGN…IYYL and FLCF…IYWV. The Fatty acid hydroxylase domain maps to 134 to 263; it reads ALYLVLVEFM…TIWMDWMFGS (130 aa). The Histidine box-1 motif lies at 148 to 152; the sequence is HKELH. Positions 162 to 166 match the Histidine box-2 motif; sequence HATHH. Residues 194 to 214 traverse the membrane as a helical segment; sequence HVIALFIVPIHLITHLSLLFL. The Histidine box-3 signature appears at 239–243; sequence HTIHH.

This sequence belongs to the sterol desaturase family. Fe cation is required as a cofactor.

It is found in the endoplasmic reticulum membrane. It catalyses the reaction a Delta(7)-sterol + 2 Fe(II)-[cytochrome b5] + O2 + 2 H(+) = a Delta(5),Delta(7)-sterol + 2 Fe(III)-[cytochrome b5] + 2 H2O. The sequence is that of Putative Delta(7)-sterol-C5(6)-desaturase 2 (HDF7) from Arabidopsis thaliana (Mouse-ear cress).